A 122-amino-acid polypeptide reads, in one-letter code: Putative iron-sulfur cluster insertion protein ErpA (122 aa).

3 residues coordinate iron-sulfur cluster: Cys50, Cys114, and Cys116.

Belongs to the HesB/IscA family. In terms of assembly, homodimer. Iron-sulfur cluster is required as a cofactor.

Its function is as follows. Required for insertion of 4Fe-4S clusters. The sequence is that of Putative iron-sulfur cluster insertion protein ErpA from Bordetella petrii (strain ATCC BAA-461 / DSM 12804 / CCUG 43448).